Reading from the N-terminus, the 273-residue chain is Secretory carrier-associated membrane protein 6 (273 aa).

The interval Met-1–Glu-69 is disordered. Residues Met-1 to Ala-131 are Cytoplasmic-facing. Residues Asn-20 to Ser-30 show a composition bias toward gly residues. Residues Arg-68–Ala-94 adopt a coiled-coil conformation. 4 consecutive transmembrane segments (helical) span residues Ser-132–Ile-152, Leu-159–Tyr-179, Phe-194–Ala-214, and Ile-239–Ile-259. The Cytoplasmic portion of the chain corresponds to Gly-260–Lys-273.

It belongs to the SCAMP family.

It is found in the cell membrane. The protein localises to the cytoplasmic vesicle. Its subcellular location is the secretory vesicle membrane. Its function is as follows. Probably involved in membrane trafficking. This is Secretory carrier-associated membrane protein 6 (SCAMP6) from Oryza sativa subsp. japonica (Rice).